The chain runs to 425 residues: tRNA(Ile)-lysidine synthase (425 aa).

Position 27 to 32 (27 to 32 (SGGLDS)) interacts with ATP.

The protein belongs to the tRNA(Ile)-lysidine synthase family.

Its subcellular location is the cytoplasm. The enzyme catalyses cytidine(34) in tRNA(Ile2) + L-lysine + ATP = lysidine(34) in tRNA(Ile2) + AMP + diphosphate + H(+). In terms of biological role, ligates lysine onto the cytidine present at position 34 of the AUA codon-specific tRNA(Ile) that contains the anticodon CAU, in an ATP-dependent manner. Cytidine is converted to lysidine, thus changing the amino acid specificity of the tRNA from methionine to isoleucine. The polypeptide is tRNA(Ile)-lysidine synthase (Streptococcus pneumoniae (strain Taiwan19F-14)).